Consider the following 54-residue polypeptide: Large ribosomal subunit protein bL33 (54 aa).

Belongs to the bacterial ribosomal protein bL33 family.

The protein is Large ribosomal subunit protein bL33 of Rhodopirellula baltica (strain DSM 10527 / NCIMB 13988 / SH1).